A 391-amino-acid chain; its full sequence is uncharacterized protein (391 aa).

Transmembrane regions (helical) follow at residues 7-27 (FILVLLVSISGFSQGMLLPVI), 39-59 (AINGLHATGLYIGVLLASPFM), 66-88 (LGFKPLIVMGGSIVILSLFGFIW), 92-111 (VWVWFLLRLFIGIGDHMLHF), 131-151 (SIYGLSFGLGFAAGPFMVPLV), 156-176 (SLPFIVSGCISLFAWLFVFFL), 197-217 (FYQAMLFGWVAFMPTFGYGFL), 239-259 (VAIILPAFAIGSIIFQFPLGI), 269-289 (VLLVILLTGALCFFIAGVFPS), 292-312 (VIGGCFFIAGMAVGSTFTLGI), 329-349 (LLCGITFSLGSILGPVAGGWY), and 356-376 (ANLFYFITLTLSSVWLALVLG).

Belongs to the major facilitator superfamily.

The protein resides in the cell membrane. This is an uncharacterized protein from Bacillus subtilis (strain 168).